The primary structure comprises 349 residues: Anthranilate phosphoribosyltransferase (349 aa).

5-phospho-alpha-D-ribose 1-diphosphate is bound by residues Gly82, 85–86 (GD), 92–95 (NVST), 110–118 (KHGNRAVSG), and Ser122. Position 82 (Gly82) interacts with anthranilate. Ser94 is a Mg(2+) binding site. Asn113 contacts anthranilate. Position 168 (Arg168) interacts with anthranilate. Residues Asp227 and Glu228 each coordinate Mg(2+).

It belongs to the anthranilate phosphoribosyltransferase family. In terms of assembly, homodimer. Mg(2+) serves as cofactor.

The enzyme catalyses N-(5-phospho-beta-D-ribosyl)anthranilate + diphosphate = 5-phospho-alpha-D-ribose 1-diphosphate + anthranilate. It participates in amino-acid biosynthesis; L-tryptophan biosynthesis; L-tryptophan from chorismate: step 2/5. Functionally, catalyzes the transfer of the phosphoribosyl group of 5-phosphorylribose-1-pyrophosphate (PRPP) to anthranilate to yield N-(5'-phosphoribosyl)-anthranilate (PRA). The protein is Anthranilate phosphoribosyltransferase of Pseudomonas fluorescens (strain ATCC BAA-477 / NRRL B-23932 / Pf-5).